Here is a 179-residue protein sequence, read N- to C-terminus: tRNA (cytidine(56)-2'-O)-methyltransferase (179 aa).

S-adenosyl-L-methionine-binding positions include leucine 82, 112-116, and 130-137; these read GAEKV and VGNQPHSE.

It belongs to the aTrm56 family. As to quaternary structure, homodimer.

The protein localises to the cytoplasm. It carries out the reaction cytidine(56) in tRNA + S-adenosyl-L-methionine = 2'-O-methylcytidine(56) in tRNA + S-adenosyl-L-homocysteine + H(+). Functionally, specifically catalyzes the AdoMet-dependent 2'-O-ribose methylation of cytidine at position 56 in tRNAs. The polypeptide is tRNA (cytidine(56)-2'-O)-methyltransferase (Methanococcus maripaludis (strain DSM 14266 / JCM 13030 / NBRC 101832 / S2 / LL)).